A 458-amino-acid chain; its full sequence is MIKQSEEEKDLLDVEFFVLGQAVNYLEHAHVVVRRLSEHHFKSENHKNIFLLIRDILRDRDTISISLIWEEIKRRNLDKSMDVSYLIHMSQNADIPIDLDHHIDFLHEKHVNNLLKEFLDSSFQDFTRYPNRRSPYTLIDQFKERLDDIYEKTSYPRRKHIGKTVYDIFSSGENGKASVIAQIRHRYDYRSRHKIDYVDGLPTGYSSIDEHSIILSRGNFVVIAARPAMGKTAFAIDIALNLVLEQGKAVGFISLEMSPNQIVERIISNLSETSCEQLKRGNFSRDVLSKIESIGTKLKGTHFFICDNKSTDLNTLIDQARELRENQGIDALFIDYLQLIGSSKKAENRQNEIAEISRQLRKLAVELQIPVVCLSQLSRKVEDRGDKRPMLSDLRDSGQIEQDADVILFLHRKDYYSQEATKGLSEIIVGKNRHGSVFSTTLRFNSCTGKFTIQKEAW.

The SF4 helicase domain occupies 194–458 (KIDYVDGLPT…GKFTIQKEAW (265 aa)). 225–232 (ARPAMGKT) contributes to the ATP binding site.

The protein belongs to the helicase family. DnaB subfamily. In terms of assembly, homohexamer.

The catalysed reaction is Couples ATP hydrolysis with the unwinding of duplex DNA at the replication fork by translocating in the 5'-3' direction. This creates two antiparallel DNA single strands (ssDNA). The leading ssDNA polymer is the template for DNA polymerase III holoenzyme which synthesizes a continuous strand.. It catalyses the reaction ATP + H2O = ADP + phosphate + H(+). In terms of biological role, a replicative DNA helicase, it participates in initiation and elongation during DNA replication. Travels ahead of the DNA replisome, separating dsDNA into templates for DNA synthesis. A processive ATP-dependent 5'-3' DNA helicase it has DNA-dependent ATPase activity. In Chlamydia psittaci (Chlamydophila psittaci), this protein is Probable plasmid replicative DNA helicase.